The primary structure comprises 261 residues: Thiamine thiazole synthase (261 aa).

Residues Ala-33, 52-53 (ER), Gly-60, Val-124, and 152-154 (HVD) each bind NAD(+). Fe cation-binding residues include Asp-154 and His-169. Met-219 provides a ligand contact to NAD(+). A glycine-binding site is contributed by Arg-229.

This sequence belongs to the THI4 family. In terms of assembly, homooctamer; tetramer of dimers. Fe(2+) serves as cofactor.

It carries out the reaction hydrogen sulfide + glycine + NAD(+) = ADP-5-ethyl-4-methylthiazole-2-carboxylate + nicotinamide + 3 H2O + H(+). Its pathway is cofactor biosynthesis; thiamine diphosphate biosynthesis. Involved in the biosynthesis of the thiazole moiety of thiamine. Catalyzes the conversion of NAD and glycine to adenosine diphosphate 5-(2-hydroxyethyl)-4-methylthiazole-2-carboxylate (ADT), an adenylated thiazole intermediate, using free sulfide as a source of sulfur. This Pyrobaculum islandicum (strain DSM 4184 / JCM 9189 / GEO3) protein is Thiamine thiazole synthase.